The following is a 396-amino-acid chain: DNA polymerase IV (396 aa).

The 181-residue stretch at 6–186 (IIHVDMDAFY…LPISRLWGVG (181 aa)) folds into the UmuC domain. Mg(2+) is bound by residues Asp10 and Asp104. Residue Glu105 is part of the active site.

This sequence belongs to the DNA polymerase type-Y family. Monomer. Mg(2+) is required as a cofactor.

The protein resides in the cytoplasm. It carries out the reaction DNA(n) + a 2'-deoxyribonucleoside 5'-triphosphate = DNA(n+1) + diphosphate. In terms of biological role, poorly processive, error-prone DNA polymerase involved in untargeted mutagenesis. Copies undamaged DNA at stalled replication forks, which arise in vivo from mismatched or misaligned primer ends. These misaligned primers can be extended by PolIV. Exhibits no 3'-5' exonuclease (proofreading) activity. May be involved in translesional synthesis, in conjunction with the beta clamp from PolIII. This Desulfatibacillum aliphaticivorans protein is DNA polymerase IV.